A 395-amino-acid chain; its full sequence is Chaperone protein DnaJ (395 aa).

The J domain occupies 4–69 (DYYEVLGLSR…DKRRRYDQFG (66 aa)). A CR-type zinc finger spans residues 151-232 (GVEKTLKIKK…CYGEGIKQGE (82 aa)). Positions 164, 167, 180, 183, 206, 209, 220, and 223 each coordinate Zn(2+). CXXCXGXG motif repeat units follow at residues 164 to 171 (CTECNGTG), 180 to 187 (CPTCHGSG), 206 to 213 (CPTCGGEG), and 220 to 227 (CVSCYGEG).

It belongs to the DnaJ family. As to quaternary structure, homodimer. Zn(2+) serves as cofactor.

The protein resides in the cytoplasm. Participates actively in the response to hyperosmotic and heat shock by preventing the aggregation of stress-denatured proteins and by disaggregating proteins, also in an autonomous, DnaK-independent fashion. Unfolded proteins bind initially to DnaJ; upon interaction with the DnaJ-bound protein, DnaK hydrolyzes its bound ATP, resulting in the formation of a stable complex. GrpE releases ADP from DnaK; ATP binding to DnaK triggers the release of the substrate protein, thus completing the reaction cycle. Several rounds of ATP-dependent interactions between DnaJ, DnaK and GrpE are required for fully efficient folding. Also involved, together with DnaK and GrpE, in the DNA replication of plasmids through activation of initiation proteins. In Chlorobium phaeobacteroides (strain DSM 266 / SMG 266 / 2430), this protein is Chaperone protein DnaJ.